Here is an 803-residue protein sequence, read N- to C-terminus: Rho guanine nucleotide exchange factor 7 (803 aa).

Met-1 is subject to N-acetylmethionine. The Calponin-homology (CH) domain occupies 1–133; sequence MNSAEQTVTW…SLVTLNKVTA (133 aa). Asn-2 is modified (N-acetylthreonine). Phosphoserine occurs at positions 153 and 176. An SH3 domain is found at 184–243; it reads NNQLVVRAKFNFQQTNEDELSFSKGDVIHVTRVEEGGWWEGTLNGRTGWFPSNYVREVKA. 2 positions are modified to phosphoserine: Ser-249 and Ser-257. In terms of domain architecture, DH spans 271–451; that stretch reads YYNVVLQNIL…KNLSAQCQEV (181 aa). Residues 473 to 578 form the PH domain; the sequence is DIKTLGNVTY…WVEHLQKQTK (106 aa). 3 positions are modified to phosphoserine: Ser-518, Cys-560, and Val-579. A disordered region spans residues 580-655; that stretch reads TSVGNPTIKP…TPKPWSLSCL (76 aa). Polar residues predominate over residues 593-606; sequence PSHTLPSHPVTPSS. Lys-645 and Ser-664 each carry phosphoserine. A compositionally biased stretch (basic residues) spans 678-690; it reads KTMKKLLPKRKPE. Disordered regions lie at residues 678–704 and 748–773; these read KTMK…RKST and DDQP…LSED. Residues 691-700 show a composition bias toward basic and acidic residues; it reads RKPSDEEFAS. At Ser-694 the chain carries Phosphoserine; by CaMK1. Residues 752–765 show a composition bias toward low complexity; sequence SLDSLGRRSSLSRL.

In terms of assembly, interacts with PAK kinases through the SH3 domain. Interacts with GIT1 and TGFB1I1. Interacts with PTK2/FAK1 and RAC1. Interacts with ITCH and PARVB. Interacts with unphosphorylated PAK1. Interacts with SCRIB; interaction is direct and may play a role in regulation of apoptosis. Interacts with FRMPD4 (via N-terminus). Interacts with CaMK1. Interacts with BIN2. Interacts with YWHAZ. Interacts (via PH domain) with NOX1 (via FAD-binding FR-type domain). As to quaternary structure, interacts with SNX27. Phosphorylated by PTK2/FAK1; this promotes interaction with RAC1. Phosphorylated on Ser-694 by CaMK1; enhancement of GEF activity and downstream activation of RAC1.

It localises to the cell junction. It is found in the focal adhesion. The protein localises to the cell projection. The protein resides in the ruffle. Its subcellular location is the cytoplasm. It localises to the cell cortex. It is found in the lamellipodium. In terms of biological role, acts as a RAC1 guanine nucleotide exchange factor (GEF) and can induce membrane ruffling. Functions in cell migration, attachment and cell spreading. Promotes targeting of RAC1 to focal adhesions. May function as a positive regulator of apoptosis. Downstream of NMDA receptors and CaMKK-CaMK1 signaling cascade, promotes the formation of spines and synapses in hippocampal neurons. This Homo sapiens (Human) protein is Rho guanine nucleotide exchange factor 7 (ARHGEF7).